We begin with the raw amino-acid sequence, 548 residues long: Membrane protein insertase YidC (548 aa).

5 helical membrane-spanning segments follow: residues 6-26 (NLIL…WESD), 349-369 (TVFQ…TLLV), 424-444 (LGGC…YWAL), 455-475 (FALW…PILM), and 503-523 (PIIF…YWLV).

Belongs to the OXA1/ALB3/YidC family. Type 1 subfamily. In terms of assembly, interacts with the Sec translocase complex via SecD. Specifically interacts with transmembrane segments of nascent integral membrane proteins during membrane integration.

The protein localises to the cell inner membrane. Required for the insertion and/or proper folding and/or complex formation of integral membrane proteins into the membrane. Involved in integration of membrane proteins that insert both dependently and independently of the Sec translocase complex, as well as at least some lipoproteins. Aids folding of multispanning membrane proteins. The polypeptide is Membrane protein insertase YidC (Aeromonas salmonicida (strain A449)).